A 246-amino-acid polypeptide reads, in one-letter code: Proteasome subunit alpha type-6 (246 aa).

Belongs to the peptidase T1A family. As to quaternary structure, the 26S proteasome consists of a 20S proteasome core and two 19S regulatory subunits. The 20S proteasome core is composed of 28 subunits that are arranged in four stacked rings, resulting in a barrel-shaped structure. The two end rings are each formed by seven alpha subunits, and the two central rings are each formed by seven beta subunits. The catalytic chamber with the active sites is on the inside of the barrel.

Its subcellular location is the cytoplasm. The protein localises to the nucleus. Its function is as follows. The proteasome is a multicatalytic proteinase complex which is characterized by its ability to cleave peptides with Arg, Phe, Tyr, Leu, and Glu adjacent to the leaving group at neutral or slightly basic pH. The proteasome has an ATP-dependent proteolytic activity. The polypeptide is Proteasome subunit alpha type-6 (PAA1) (Nicotiana tabacum (Common tobacco)).